The chain runs to 440 residues: Deoxyguanosinetriphosphate triphosphohydrolase-like protein (440 aa).

The 194-residue stretch at 62 to 255 (RLTHSLEAAQ…MELADDIAYG (194 aa)) folds into the HD domain.

Belongs to the dGTPase family. Type 2 subfamily.

This is Deoxyguanosinetriphosphate triphosphohydrolase-like protein from Vibrio parahaemolyticus serotype O3:K6 (strain RIMD 2210633).